Consider the following 873-residue polypeptide: K(+)/H(+) antiporter 1 (873 aa).

Topologically, residues 1–23 are extracellular; the sequence is MANTVGGILSGVNPFHYNSSSPL. The chain crosses the membrane as a helical span at residues 24–44; the sequence is TLFLFQACLILLVCNLIHIPF. Residues 45 to 51 lie on the Cytoplasmic side of the membrane; it reads SMMRQPK. The helical transmembrane segment at 52–72 threads the bilayer; it reads VISEVISGVILGPTIFGQIPN. The Extracellular portion of the chain corresponds to 73–82; that stretch reads YTNTIFPTSS. The helical transmembrane segment at 83 to 103 threads the bilayer; the sequence is IPGLNLVANLGIILFMFFLGL. Residues 104–116 lie on the Cytoplasmic side of the membrane; sequence EVDIAFIKKHLKK. A helical membrane pass occupies residues 117–137; the sequence is ALVIGIVTLAVPFGFGCLLAI. Topologically, residues 138 to 154 are extracellular; that stretch reads PLFHTYANKTEGERHIK. The helical transmembrane segment at 155 to 175 threads the bilayer; the sequence is FSVFMVFIAVSISVTAFPVLC. The Cytoplasmic portion of the chain corresponds to 176–188; sequence RILNELRLIKDRA. A helical transmembrane segment spans residues 189 to 209; it reads GIVVLAAGIINDIMGWILLAL. Over 210-220 the chain is Extracellular; the sequence is SIILSSAEGSP. A helical membrane pass occupies residues 221–241; the sequence is VNTVYILLITFAWFLIYFFPL. Topologically, residues 242 to 267 are cytoplasmic; that stretch reads KYLLRWVLIRTHELDRSKPSPLATMC. Residues 268 to 288 form a helical membrane-spanning segment; the sequence is ILFIMFISAYFTDIIGVHPIF. Over 289–316 the chain is Extracellular; that stretch reads GAFIAGLVVPRDDHYVVKLTERMEDIPN. Residues 317-337 form a helical membrane-spanning segment; sequence IVFIPIYFAVAGLNVDLTLLN. Over 338-341 the chain is Cytoplasmic; sequence EGRD. Residues 342 to 362 traverse the membrane as a helical segment; that stretch reads WGYVFATIGIAIFTKIISGTL. At 363–375 the chain is on the extracellular side; it reads TAKLTGLFWREAT. Residues 376-396 traverse the membrane as a helical segment; it reads AAGVLMSCKGIVEIVVLTVGL. At 397-404 the chain is on the cytoplasmic side; the sequence is NAGIISRK. The chain crosses the membrane as a helical span at residues 405–425; the sequence is IFGMFVLMALVSTFVTTPLTQ. The Extracellular segment spans residues 426–726; sequence LVYPDSYRDG…DRFKRKRFNL (301 aa). Residue Ser557 is modified to Phosphoserine. Lys562 participates in a covalent cross-link: Glycyl lysine isopeptide (Lys-Gly) (interchain with G-Cter in ubiquitin). The chain crosses the membrane as a helical span at residues 727 to 747; that stretch reads LLPKPYLTQSDYLGLYLLLLI. The Cytoplasmic portion of the chain corresponds to 748–873; sequence CYRDGYNNDN…TLIVHHFSSE (126 aa).

Belongs to the monovalent cation:proton antiporter 2 (CPA2) transporter (TC 2.A.37) family.

It is found in the membrane. In terms of biological role, potassium-proton antiport. This Saccharomyces cerevisiae (strain ATCC 204508 / S288c) (Baker's yeast) protein is K(+)/H(+) antiporter 1 (KHA1).